An 82-amino-acid chain; its full sequence is MDVDHEVKELVKFIKKLGTKGADGKYSVKYGVLFNDDDVANFFEALVGTLKAAKKRGIITFQGEILLQRVHDNVDVILLKDE.

It belongs to the costars family.

Its function is as follows. Modulates actin dynamics and cell motility. The polypeptide is Protein costars (cosA) (Dictyostelium discoideum (Social amoeba)).